A 319-amino-acid polypeptide reads, in one-letter code: Epoxyqueuosine reductase (319 aa).

The Proton donor role is filled by aspartate 146. The 4Fe-4S ferredoxin-type domain occupies 188–220 (ASLPADQPARSLCGHCQRCLPACPTAAITEPFV). The [4Fe-4S] cluster site is built by cysteine 200, cysteine 203, cysteine 206, cysteine 210, cysteine 226, cysteine 250, cysteine 253, and cysteine 257.

Belongs to the QueG family. Monomer. The cofactor is cob(II)alamin. [4Fe-4S] cluster is required as a cofactor.

The protein resides in the cytoplasm. The enzyme catalyses epoxyqueuosine(34) in tRNA + AH2 = queuosine(34) in tRNA + A + H2O. Its pathway is tRNA modification; tRNA-queuosine biosynthesis. Its function is as follows. Catalyzes the conversion of epoxyqueuosine (oQ) to queuosine (Q), which is a hypermodified base found in the wobble positions of tRNA(Asp), tRNA(Asn), tRNA(His) and tRNA(Tyr). The chain is Epoxyqueuosine reductase from Synechococcus sp. (strain RCC307).